Here is a 266-residue protein sequence, read N- to C-terminus: Putative cysteine-rich repeat secretory protein 20 (266 aa).

The first 33 residues, 1-33 (MYFPPSSVPKRLVLVHISAVVAIKLLLIRSVSS), serve as a signal peptide directing secretion. Gnk2-homologous domains are found at residues 40 to 142 (YLQH…SIRN) and 148 to 261 (YNNN…LYPF).

The protein belongs to the cysteine-rich repeat secretory protein family.

The protein resides in the secreted. The chain is Putative cysteine-rich repeat secretory protein 20 (CRRSP20) from Arabidopsis thaliana (Mouse-ear cress).